Here is a 151-residue protein sequence, read N- to C-terminus: uncharacterized protein (151 aa).

The tract at residues 48–151 (RPPGWQPPVN…SKFDHTRKKF (104 aa)) is disordered. Residues 55-77 (PVNTGPTSPVSINASNAAPSNLK) are compositionally biased toward polar residues. 2 stretches are compositionally biased toward low complexity: residues 85-105 (PRRLSSSTSSASSPPLRRLPS) and 123-141 (KSPSTTKPLSSTPSGSLLR).

This is an uncharacterized protein from Schizosaccharomyces pombe (strain 972 / ATCC 24843) (Fission yeast).